The chain runs to 667 residues: Threonine--tRNA ligase (667 aa).

The TGS domain maps to 1-64 (MSEAISLTFP…TDGKIEIVTR (64 aa)). The interval 245–553 (DHRRLGREMD…LIENFAGHMP (309 aa)) is catalytic. Zn(2+) is bound by residues cysteine 347, histidine 398, and histidine 530.

It belongs to the class-II aminoacyl-tRNA synthetase family. Homodimer. It depends on Zn(2+) as a cofactor.

The protein localises to the cytoplasm. The enzyme catalyses tRNA(Thr) + L-threonine + ATP = L-threonyl-tRNA(Thr) + AMP + diphosphate + H(+). In terms of biological role, catalyzes the attachment of threonine to tRNA(Thr) in a two-step reaction: L-threonine is first activated by ATP to form Thr-AMP and then transferred to the acceptor end of tRNA(Thr). Also edits incorrectly charged L-seryl-tRNA(Thr). The chain is Threonine--tRNA ligase from Agrobacterium fabrum (strain C58 / ATCC 33970) (Agrobacterium tumefaciens (strain C58)).